The following is a 462-amino-acid chain: Metal cation symporter ZIP8 (462 aa).

The signal sequence occupies residues M1–G19. At R20–G132 the chain is on the extracellular side. N-linked (GlcNAc...) asparagine glycosylation is found at N40, N88, and N96. Residues F133 to I153 traverse the membrane as a helical segment. At K154 to K160 the chain is on the cytoplasmic side. A helical transmembrane segment spans residues I161 to L181. Residues I182–K191 are Extracellular-facing. A helical membrane pass occupies residues I192–V212. The Cytoplasmic segment spans residues E213–A367. The XEXPHE-motif signature appears at E345–E350. The helical transmembrane segment at L368 to V388 threads the bilayer. Residues G389–N390 are Extracellular-facing. Residues N391–A411 traverse the membrane as a helical segment. Topologically, residues D412–D431 are cytoplasmic. The chain crosses the membrane as a helical span at residues F432–I452. Over T453–Q462 the chain is Extracellular.

Belongs to the ZIP transporter (TC 2.A.5) family. In terms of assembly, homodimer. N-glycosylated. N-glycosylation is not required for proper iron and zinc transport.

The protein resides in the cell membrane. It is found in the lysosome membrane. It localises to the apical cell membrane. The protein localises to the basolateral cell membrane. It carries out the reaction Zn(2+)(out) + 2 hydrogencarbonate(out) = Zn(2+)(in) + 2 hydrogencarbonate(in). The enzyme catalyses selenite(out) + Zn(2+)(out) + hydrogencarbonate(out) = selenite(in) + Zn(2+)(in) + hydrogencarbonate(in). The catalysed reaction is Mn(2+)(out) + 2 hydrogencarbonate(out) = Mn(2+)(in) + 2 hydrogencarbonate(in). It catalyses the reaction Fe(2+)(out) + 2 hydrogencarbonate(out) = Fe(2+)(in) + 2 hydrogencarbonate(in). It carries out the reaction Cd(2+)(out) + 2 hydrogencarbonate(out) = Cd(2+)(in) + 2 hydrogencarbonate(in). The enzyme catalyses Co(2+)(out) + 2 hydrogencarbonate(out) = Co(2+)(in) + 2 hydrogencarbonate(in). Its function is as follows. Electroneutral divalent metal cation:bicarbonate symporter of the plasma membrane mediating the cellular uptake of zinc and manganese, two divalent metal cations important for development, tissue homeostasis and immunity. Transports an electroneutral complex composed of a divalent metal cation and two bicarbonate anions or alternatively a bicarbonate and a selenite anion. Thereby, it also contributes to the cellular uptake of selenium, an essential trace metal and micronutrient. Also imports cadmium a non-essential metal which is cytotoxic and carcinogenic. May also transport iron and cobalt through membranes. Through zinc import, indirectly regulates the metal-dependent transcription factor MTF1 and the expression of some metalloproteases involved in cartilage catabolism and also probably heart development. Also indirectly regulates the expression of proteins involved in cell morphology and cytoskeleton organization. Indirectly controls innate immune function and inflammatory response by regulating zinc cellular uptake which in turn modulates the expression of genes specific of these processes. Protects, for instance, cells from injury and death at the onset of inflammation. By regulating zinc influx into monocytes also directly modulates their adhesion to endothelial cells and arteries. Reclaims manganese from the bile at the apical membrane of hepatocytes, thereby regulating the activity of the manganese-dependent enzymes through the systemic levels of the nutrient. Also participates in manganese reabsorption in the proximal tubule of the kidney. By mediating the extracellular uptake of manganese by cells of the blood-brain barrier, may also play a role in the transport of the micronutrient to the brain. With manganese cellular uptake also participates in mitochondrial proper function. Finally, also probably functions intracellularly, translocating zinc from lysosome to cytosol to indirectly enhance the expression of specific genes during TCR-mediated T cell activation. The sequence is that of Metal cation symporter ZIP8 from Rattus norvegicus (Rat).